A 155-amino-acid polypeptide reads, in one-letter code: Ribosomal RNA large subunit methyltransferase H (155 aa).

S-adenosyl-L-methionine contacts are provided by residues Leu-73, Gly-104, and 123–128; that span reads LSPLTL.

It belongs to the RNA methyltransferase RlmH family. Homodimer.

It localises to the cytoplasm. It catalyses the reaction pseudouridine(1915) in 23S rRNA + S-adenosyl-L-methionine = N(3)-methylpseudouridine(1915) in 23S rRNA + S-adenosyl-L-homocysteine + H(+). Functionally, specifically methylates the pseudouridine at position 1915 (m3Psi1915) in 23S rRNA. The polypeptide is Ribosomal RNA large subunit methyltransferase H (Pseudomonas aeruginosa (strain LESB58)).